The primary structure comprises 284 residues: Bifunctional protein FolD (284 aa).

NADP(+)-binding positions include 166 to 168 and Ile-232; that span reads GAS.

This sequence belongs to the tetrahydrofolate dehydrogenase/cyclohydrolase family. As to quaternary structure, homodimer.

It catalyses the reaction (6R)-5,10-methylene-5,6,7,8-tetrahydrofolate + NADP(+) = (6R)-5,10-methenyltetrahydrofolate + NADPH. It carries out the reaction (6R)-5,10-methenyltetrahydrofolate + H2O = (6R)-10-formyltetrahydrofolate + H(+). It participates in one-carbon metabolism; tetrahydrofolate interconversion. Catalyzes the oxidation of 5,10-methylenetetrahydrofolate to 5,10-methenyltetrahydrofolate and then the hydrolysis of 5,10-methenyltetrahydrofolate to 10-formyltetrahydrofolate. The polypeptide is Bifunctional protein FolD (Tolumonas auensis (strain DSM 9187 / NBRC 110442 / TA 4)).